A 155-amino-acid chain; its full sequence is Glutamyl-tRNA(Gln) amidotransferase subunit C, chloroplastic/mitochondrial (155 aa).

The transit peptide at 1–52 (MATRALLAVIYASPNRCYISPSRIKIQSLTCSSSSHYYQRQSRKNHRIARSY) directs the protein to the chloroplast and mitochondrion.

This sequence belongs to the GatC family. In terms of assembly, subunit of the heterotrimeric GatCAB amidotransferase (AdT) complex, composed of A, B and C subunits.

It is found in the mitochondrion. The protein localises to the plastid. The protein resides in the chloroplast. The enzyme catalyses L-glutamyl-tRNA(Gln) + L-glutamine + ATP + H2O = L-glutaminyl-tRNA(Gln) + L-glutamate + ADP + phosphate + H(+). Functionally, allows the formation of correctly charged Gln-tRNA(Gln) through the transamidation of misacylated Glu-tRNA(Gln) in chloroplasts and mitochondria. The reaction takes place in the presence of glutamine and ATP through an activated gamma-phospho-Glu-tRNA(Gln). The polypeptide is Glutamyl-tRNA(Gln) amidotransferase subunit C, chloroplastic/mitochondrial (Arabidopsis thaliana (Mouse-ear cress)).